Consider the following 85-residue polypeptide: Small ribosomal subunit protein uS17 (85 aa).

This sequence belongs to the universal ribosomal protein uS17 family. As to quaternary structure, part of the 30S ribosomal subunit.

Its function is as follows. One of the primary rRNA binding proteins, it binds specifically to the 5'-end of 16S ribosomal RNA. The polypeptide is Small ribosomal subunit protein uS17 (Anaeromyxobacter dehalogenans (strain 2CP-1 / ATCC BAA-258)).